A 321-amino-acid polypeptide reads, in one-letter code: Capsid protein (321 aa).

A disordered region spans residues 1–43; sequence MSGEQTEQISKDKAVAAEQARKEQIAEGKKAAESPEVERRKKN. Residues 9-39 are compositionally biased toward basic and acidic residues; sequence ISKDKAVAAEQARKEQIAEGKKAAESPEVER.

It belongs to the potexviruses coat protein family.

It localises to the virion. In terms of biological role, required for genome encapsidation. Forms ribonucleoprotein complexes along with TGB1 helicase and viral RNA. This chain is Capsid protein, found in Poplar mosaic virus (isolate ATCC Pv275) (PMV).